We begin with the raw amino-acid sequence, 513 residues long: 2,3-bisphosphoglycerate-independent phosphoglycerate mutase (513 aa).

The Mn(2+) site is built by aspartate 13 and serine 63. Catalysis depends on serine 63, which acts as the Phosphoserine intermediate. Residues histidine 124, arginine 154 to aspartate 155, arginine 186, arginine 192, arginine 262 to arginine 265, and lysine 335 contribute to the substrate site. Residues aspartate 402, histidine 406, aspartate 443, histidine 444, and histidine 462 each contribute to the Mn(2+) site.

It belongs to the BPG-independent phosphoglycerate mutase family. As to quaternary structure, monomer. Mn(2+) serves as cofactor.

It carries out the reaction (2R)-2-phosphoglycerate = (2R)-3-phosphoglycerate. It functions in the pathway carbohydrate degradation; glycolysis; pyruvate from D-glyceraldehyde 3-phosphate: step 3/5. Functionally, catalyzes the interconversion of 2-phosphoglycerate and 3-phosphoglycerate. This Photobacterium profundum (strain SS9) protein is 2,3-bisphosphoglycerate-independent phosphoglycerate mutase.